Here is a 357-residue protein sequence, read N- to C-terminus: U3 small nucleolar ribonucleoprotein protein LCP5 (357 aa).

Residue S2 is modified to N-acetylserine. Disordered regions lie at residues 146–211 and 301–357; these read STLV…YKPP and NKAE…QRRL. Residues 155–166 show a composition bias toward acidic residues; the sequence is DDSEDDESSEDE. Residues 171–183 show a composition bias toward polar residues; that stretch reads PNTSGIINTNKKS. Basic and acidic residues-rich tracts occupy residues 187 to 196 and 348 to 357; these read RVEETAKQEN and SAWDRAQRRL.

It is found in the nucleus. The protein localises to the nucleolus. Its function is as follows. Component of the U3 small nucleolar ribonucleoprotein. Required for the early cleavages at sites A0, A1 and A2 of the pre-ribosomal RNA. Participates in ribosome biogenesis. The protein is U3 small nucleolar ribonucleoprotein protein LCP5 (LCP5) of Saccharomyces cerevisiae (strain ATCC 204508 / S288c) (Baker's yeast).